Here is a 496-residue protein sequence, read N- to C-terminus: DNA-directed DNA/RNA polymerase mu (496 aa).

Residues 1-22 (MLPKRRRVRAGSPHSAVASSTP) are disordered. Ser-12 is modified (phosphoserine). The span at 12-22 (SPHSAVASSTP) shows a compositional bias: low complexity. The 100-residue stretch at 23 to 122 (PSVVRFPDVA…QPVPEEGRHH (100 aa)) folds into the BRCT domain. Positions 241 and 243 each coordinate Na(+). Residues 323–332 (RGKLQGHDVD) are involved in ssDNA binding. Asp-330, Asp-332, and Asp-420 together coordinate Mg(2+).

It belongs to the DNA polymerase type-X family. Mg(2+) serves as cofactor.

The protein localises to the nucleus. The enzyme catalyses DNA(n) + a 2'-deoxyribonucleoside 5'-triphosphate = DNA(n+1) + diphosphate. Functionally, gap-filling polymerase involved in repair of DNA double-strand breaks by non-homologous end joining (NHEJ). Participates in immunoglobulin (Ig) light chain gene rearrangement in V(D)J recombination. The chain is DNA-directed DNA/RNA polymerase mu (Polm) from Mus musculus (Mouse).